The sequence spans 111 residues: ATP-dependent Clp protease adapter protein ClpS (111 aa).

The protein belongs to the ClpS family. In terms of assembly, binds to the N-terminal domain of the chaperone ClpA.

Involved in the modulation of the specificity of the ClpAP-mediated ATP-dependent protein degradation. The polypeptide is ATP-dependent Clp protease adapter protein ClpS (Legionella pneumophila (strain Corby)).